Consider the following 890-residue polypeptide: DNA mismatch repair protein MutS (890 aa).

634–641 lines the ATP pocket; the sequence is GPNMGGKS.

Belongs to the DNA mismatch repair MutS family.

In terms of biological role, this protein is involved in the repair of mismatches in DNA. It is possible that it carries out the mismatch recognition step. This protein has a weak ATPase activity. This chain is DNA mismatch repair protein MutS, found in Burkholderia pseudomallei (strain 1710b).